We begin with the raw amino-acid sequence, 626 residues long: Chaperone protein HtpG (626 aa).

Positions 1–341 (METKQFKAES…SEDLSLNISR (341 aa)) are a; substrate-binding. A b region spans residues 342 to 552 (EMLQHDRQLK…EGEISIEMEK (211 aa)). The interval 553 to 626 (ILSAMPNNEN…FSNSICKLMI (74 aa)) is c.

The protein belongs to the heat shock protein 90 family. Homodimer.

The protein localises to the cytoplasm. Functionally, molecular chaperone. Has ATPase activity. The protein is Chaperone protein HtpG of Alkaliphilus oremlandii (strain OhILAs) (Clostridium oremlandii (strain OhILAs)).